Reading from the N-terminus, the 280-residue chain is Cyanocobalamin reductase / alkylcobalamin dealkylase (280 aa).

Residues Asp104, 115–118 (ILAQ), 129–131 (YYQ), Cys149, and Ile160 each bind substrate. Phosphoserine occurs at positions 245, 247, 273, and 277. The tract at residues 256–280 (LSKKPQNPRRGWLSPTVSPPISPGP) is disordered.

It belongs to the MMACHC family. In terms of assembly, monomer in the absence of bound substrate. Homodimer; dimerization is triggered by binding to FMN or adenosylcobalamin. Interacts with LMBRD1 and ABCD4; the interaction ensures the transport of cobalamin from the lysosome to the cytoplasm. Forms a multiprotein complex with MMADHC, MTR and MTRR; the interaction with MTR could modulate MMACHC-dependent processing of cobalamin. Heterodimer with MMADHC; the interaction might play a role in the regulation of the balance between AdoCbl and MeCbl synthesis. Requires FAD as cofactor. FMN serves as cofactor.

It localises to the cytoplasm. The protein localises to the cytosol. It carries out the reaction 2 cob(II)alamin-[cyanocobalamin reductase] + 2 hydrogen cyanide + NADP(+) = 2 cyanocob(III)alamin + 2 apo-[cyanocobalamin reductase] + NADPH + H(+). The catalysed reaction is apo-[alkylcobalamin reductase] + an R-cob(III)alamin + glutathione = cob(I)alamin-[alkylcobalamin reductase] + an S-substituted glutathione + H(+). The enzyme catalyses apo-[alkylcobalamin reductase] + methylcob(III)alamin + glutathione = S-methyl glutathione + cob(I)alamin-[alkylcobalamin reductase] + H(+). It catalyses the reaction apo-[alkylcobalamin reductase] + adenosylcob(III)alamin + glutathione = S-adenosylglutathione + cob(I)alamin-[alkylcobalamin reductase] + H(+). Cobalamin (vitamin B12) cytosolic chaperone that catalyzes the reductive decyanation of cyanocob(III)alamin (cyanocobalamin, CNCbl) to yield cob(II)alamin and cyanide, using FAD or FMN as cofactors and NADPH as cosubstrate. Cyanocobalamin constitutes the inactive form of vitamin B12 introduced from the diet, and is converted into the active cofactors methylcobalamin (MeCbl) involved in methionine biosynthesis, and 5'-deoxyadenosylcobalamin (AdoCbl) involved in the TCA cycle. Forms a complex with the lysosomal transporter ABCD4 and its chaperone LMBRD1, to transport cobalamin across the lysosomal membrane into the cytosol. The processing of cobalamin in the cytosol occurs in a multiprotein complex composed of at least MMACHC, MMADHC, MTRR (methionine synthase reductase) and MTR (methionine synthase) which may contribute to shuttle safely and efficiently cobalamin towards MTR in order to produce methionine. Also acts as a glutathione transferase by catalyzing the dealkylation of the alkylcob(III)alamins MeCbl and AdoCbl, using the thiolate of glutathione for nucleophilic displacement to generate cob(I)alamin and the corresponding glutathione thioether. The conversion of incoming MeCbl or AdoCbl into a common intermediate cob(I)alamin is necessary to meet the cellular needs for both cofactors. Cysteine and homocysteine cannot substitute for glutathione in this reaction. This Bos taurus (Bovine) protein is Cyanocobalamin reductase / alkylcobalamin dealkylase (MMACHC).